We begin with the raw amino-acid sequence, 239 residues long: uncharacterized protein (239 aa).

The next 8 membrane-spanning stretches (helical) occupy residues 4–24 (LIPK…LGMV), 29–49 (VIWH…VYPV), 61–81 (YQKW…ISVF), 84–104 (PPLI…MYFA), 116–136 (VAGV…GMGT), 139–159 (GWAW…SFYV), 180–200 (LLLP…AFIP), and 218–238 (IGIL…LFIT).

It to H.influenzae HI_1626.

The protein resides in the cell membrane. This is an uncharacterized protein from Bacillus subtilis (strain 168).